The following is a 104-amino-acid chain: MIRKAFVMQVNPDSHDEYERRHTPIWPELESVLKDHGAHHYAIYLDKARNLLFATVEIESEERWNAVAHTDVCQRWWKHMRDVMPSNPDNSPVSAELKEVFYLD.

Y18 contacts substrate. H22 serves as the catalytic Proton donor. Residues Y41 and 76-77 (WW) contribute to the substrate site.

This sequence belongs to the rhamnose mutarotase family. As to quaternary structure, homodimer.

The protein resides in the cytoplasm. The catalysed reaction is alpha-L-rhamnose = beta-L-rhamnose. It functions in the pathway carbohydrate metabolism; L-rhamnose metabolism. Its function is as follows. Involved in the anomeric conversion of L-rhamnose. The protein is L-rhamnose mutarotase of Enterobacter sp. (strain 638).